A 608-amino-acid chain; its full sequence is Mitogen-activated protein kinase kinase kinase 1 (608 aa).

Over residues 1-13 (MDRILARMKKSTG) the composition is skewed to basic residues. Residues 1–20 (MDRILARMKKSTGRRGGDKN) are disordered. Residues 1–325 (MDRILARMKK…VSNTSPIYPD (325 aa)) form a regulatory region region. Phosphoserine is present on S62. The binding with MPK4 stretch occupies residues 192 to 234 (MERTPTIVKSKGYLVPNNVVAVGVGVGGGIKGLRPPVLKPPPA). Disordered stretches follow at residues 228–247 (VLKP…GSSW) and 256–287 (SETV…EAEE). Acidic residues predominate over residues 271-287 (DGCDEEEGKEEEAEAEE). A Protein kinase domain is found at 333–587 (WQKGQLLGRG…AAELLNHPFV (255 aa)). Residues 339-347 (LGRGSFGSV) and K361 each bind ATP. D456 functions as the Proton acceptor in the catalytic mechanism. S603 carries the phosphoserine modification.

Belongs to the protein kinase superfamily. STE Ser/Thr protein kinase family. MAP kinase kinase kinase subfamily. In terms of assembly, interacts with MKK1, MMK2 and MPK4. May form a ternary complex composed of MEKK1 and MKK1/MKK2 and MPK4. Interacts with RACK1A, RACK1B and RACK1C. Binds to CRLK1. Phosphorylated by CRLK1 in response to cold.

It is found in the cell membrane. The protein localises to the endosome. The enzyme catalyses L-seryl-[protein] + ATP = O-phospho-L-seryl-[protein] + ADP + H(+). It catalyses the reaction L-threonyl-[protein] + ATP = O-phospho-L-threonyl-[protein] + ADP + H(+). With respect to regulation, activated by cold via CRLK1-mediated phosphorylation and leading to elevated kinase activity towards MKK2. Functionally, the MEKK1, MKK1/MKK2 and MPK4 function in a signaling pathway that modulates the expression of genes responding to biotic and abiotic stresses and also plays an important role in pathogen defense by negatively regulating innate immunity. Involved in the innate immune MAP kinase signaling cascade (MEKK1, MKK4/MKK5 and MPK3/MPK6) downstream of bacterial flagellin receptor FLS2. May be involved in the cold and salinity stress-mediated MAP kinase signaling cascade (MEKK1, MKK1/MKK2 and MPK4/MPK6). Activates by phosphorylation the downstream MKK2, MKK4 and MKK5 in a calcium-dependent manner. The sequence is that of Mitogen-activated protein kinase kinase kinase 1 (MEKK1) from Arabidopsis thaliana (Mouse-ear cress).